An 85-amino-acid chain; its full sequence is Large ribosomal subunit protein bL31B (85 aa).

The protein belongs to the bacterial ribosomal protein bL31 family. Type B subfamily. In terms of assembly, part of the 50S ribosomal subunit.

This Staphylococcus haemolyticus (strain JCSC1435) protein is Large ribosomal subunit protein bL31B.